The following is a 175-amino-acid chain: Co-chaperone protein HscB homolog (175 aa).

Positions 7-79 (SHFDLFDLPA…LKRATYLLHL (73 aa)) constitute a J domain.

The protein belongs to the HscB family. As to quaternary structure, interacts with HscA and stimulates its ATPase activity.

In terms of biological role, co-chaperone involved in the maturation of iron-sulfur cluster-containing proteins. Seems to help targeting proteins to be folded toward HscA. This is Co-chaperone protein HscB homolog from Paraburkholderia xenovorans (strain LB400).